A 974-amino-acid polypeptide reads, in one-letter code: Pentatricopeptide repeat-containing protein At5g61990, mitochondrial (974 aa).

The N-terminal 31 residues, 1-31, are a transit peptide targeting the mitochondrion; the sequence is MMGSMLFRKRTLVTRANFLLFRSFSVNVEKL. 24 PPR repeats span residues 96-130, 150-184, 185-219, 220-250, 257-275, 276-310, 311-345, 346-380, 381-415, 416-450, 451-485, 486-520, 521-555, 556-590, 591-625, 626-660, 661-695, 696-730, 731-761, 765-799, 804-838, 839-873, 874-908, and 914-948; these read KLDSFSFLALDLCNFGSFEKALSVVERMIERNWPV, DGVLFGILFDGYIAKGYIEEAVFVFSSSMGLELVP, RLSRCKVLLDALLRWNRLDLFWDVYKGMVERNVVF, DVKTYHMLIIAHCRAGNVQLGKDVLFKTEKE, NVDGALKLKESMICKGLVP, LKYTYDVLIDGLCKIKRLEDAKSLLVEMDSLGVSL, DNHTYSLLIDGLLKGRNADAAKGLVHEMVSHGINI, KPYMYDCCICVMSKEGVMEKAKALFDGMIASGLIP, QAQAYASLIEGYCREKNVRQGYELLVEMKKRNIVI, SPYTYGTVVKGMCSSGDLDGAYNIVKEMIASGCRP, NVVIYTTLIKTFLQNSRFGDAMRVLKEMKEQGIAP, DIFCYNSLIIGLSKAKRMDEARSFLVEMVENGLKP, NAFTYGAFISGYIEASEFASADKYVKEMRECGVLP, NKVLCTGLINEYCKKGKVIEACSAYRSMVDQGILG, DAKTYTVLMNGLFKNDKVDDAEEIFREMRGKGIAP, DVFSYGVLINGFSKLGNMQKASSIFDEMVEEGLTP, NVIIYNMLLGGFCRSGEIEKAKELLDEMSVKGLHP, NAVTYCTIIDGYCKSGDLAEAFRLFDEMKLKGLVP, DSFVYTTLVDGCCRLNDVERAITIFGTNKKG, STAPFNALINWVFKFGKTELKTEVLNRLMDGSFDR, NDVTYNIMIDYLCKEGNLEAAKELFHQMQNANLMP, TVITYTSLLNGYDKMGRRAEMFPVFDEAIAAGIEP, DHIMYSVIINAFLKEGMTTKALVLVDQMFAKNAVD, and SISTCRALLSGFAKVGEMEVAEKVMENMVRLQYIP.

This sequence belongs to the PPR family. P subfamily.

Its subcellular location is the mitochondrion. The polypeptide is Pentatricopeptide repeat-containing protein At5g61990, mitochondrial (Arabidopsis thaliana (Mouse-ear cress)).